We begin with the raw amino-acid sequence, 224 residues long: Charged multivesicular body protein 4b (224 aa).

The tract at residues 1 to 23 (MSVFGKLFGAGGGKAGKGGPTPQ) is disordered. Serine 2 bears the N-acetylserine mark. The intramolecular interaction with C-terminus stretch occupies residues 2 to 153 (SVFGKLFGAG…EISTAISKPV (152 aa)). Lysine 6 is subject to N6-acetyllysine. Gly residues predominate over residues 8-19 (FGAGGGKAGKGG). A coiled-coil region spans residues 23–183 (QEAIQRLRDT…EELDKNLLEI (161 aa)). At lysine 114 the chain carries N6-acetyllysine. The intramolecular interaction with N-terminus stretch occupies residues 154–224 (GFGEEFDEDE…KELENWAGSM (71 aa)). A phosphoserine mark is found at serine 184 and serine 223. A disordered region spans residues 185–224 (GPETVPLPNVPSVALPSKPAKKKEEEDDDMKELENWAGSM).

The protein belongs to the SNF7 family. In terms of assembly, probable core component of the endosomal sorting required for transport complex III (ESCRT-III). ESCRT-III components are thought to multimerize to form a flat lattice on the perimeter membrane of the endosome. Several assembly forms of ESCRT-III may exist that interact and act sequentially. Interacts with CHMP6 and CHMP4C. Interacts with PDCD6IP; the interaction is direct. Interacts with VPS4A; the interaction is direct. Interacts with VPS4B; the interaction is direct. Interacts with CHMP7. Interacts with CFTR; the interaction requires misfolded CFTR. Interacts with PTPN23. Interacts with CC2D1B. Post-translationally, ISGylated. Isgylation weakens its interaction with VPS4A.

The protein resides in the cytoplasm. The protein localises to the cytosol. It is found in the late endosome membrane. Its subcellular location is the midbody. It localises to the nucleus envelope. In terms of biological role, probable core component of the endosomal sorting required for transport complex III (ESCRT-III) which is involved in multivesicular bodies (MVBs) formation and sorting of endosomal cargo proteins into MVBs. MVBs contain intraluminal vesicles (ILVs) that are generated by invagination and scission from the limiting membrane of the endosome and mostly are delivered to lysosomes enabling degradation of membrane proteins, such as stimulated growth factor receptors, lysosomal enzymes and lipids. The MVB pathway appears to require the sequential function of ESCRT-O, -I,-II and -III complexes. ESCRT-III proteins mostly dissociate from the invaginating membrane before the ILV is released. The ESCRT machinery also functions in topologically equivalent membrane fission events, such as the terminal stages of cytokinesis. Together with SPAST, the ESCRT-III complex promotes nuclear envelope sealing and mitotic spindle disassembly during late anaphase. Plays a role in the endosomal sorting pathway. ESCRT-III proteins are believed to mediate the necessary vesicle extrusion and/or membrane fission activities, possibly in conjunction with the AAA ATPase VPS4. When overexpressed, membrane-assembled circular arrays of CHMP4B filaments can promote or stabilize negative curvature and outward budding. CHMP4A/B/C are required for the exosomal release of SDCBP, CD63 and syndecan. Majority of the protein exists in a folded closed conformation. This chain is Charged multivesicular body protein 4b (Chmp4b), found in Mus musculus (Mouse).